A 65-amino-acid chain; its full sequence is Large ribosomal subunit protein bL35 (65 aa).

The disordered stretch occupies residues 1–25; that stretch reads MPKMKSHRGAAKRFKKTGTGKLKRA.

Belongs to the bacterial ribosomal protein bL35 family.

In Clostridium botulinum (strain Alaska E43 / Type E3), this protein is Large ribosomal subunit protein bL35.